We begin with the raw amino-acid sequence, 200 residues long: NAD(P)H dehydrogenase (quinone) (200 aa).

Positions 4–191 (VLVLYYSSYG…DIARYQGKHV (188 aa)) constitute a Flavodoxin-like domain. Residues 10 to 15 (SSYGHV) and 79 to 81 (TRF) each bind FMN. Position 12 (Tyr12) interacts with NAD(+). Position 99 (Trp99) interacts with substrate. Residues 114–120 (STGTQHG) and His135 each bind FMN.

This sequence belongs to the WrbA family. It depends on FMN as a cofactor.

The enzyme catalyses a quinone + NADH + H(+) = a quinol + NAD(+). It catalyses the reaction a quinone + NADPH + H(+) = a quinol + NADP(+). This is NAD(P)H dehydrogenase (quinone) from Burkholderia vietnamiensis (strain G4 / LMG 22486) (Burkholderia cepacia (strain R1808)).